The following is a 517-amino-acid chain: MAAAALNGLKMAATSQAYLESMPVNDTRKLLSDLCRHFYGLGWVSGTGGSITIKVHDESIPKPQQLIVMSPSGVQKERMVPEDMYVLSPSGCFLSSPSPKPYPNKPPKCSDCAPLFMKAYLMRNAGAVIHSHGMESCIVTMIDPLSKEFRITHMEMIKGIQGHGYYDELVVPIIENTAHERELTDALAEAIEAYPKTTAVLVRNHGIYIWGDSWIHAKTQAECYHYLFDAAIKLYQLGLDWSTPDHGPIKKYGGKTNMSVKAGTVNSNHETEPSRRCIVLDIEGTTTPISFVTDVLFPFARNNVSRHLAATYETDETQDDIKLLRTQVQSDLEQGIVGAVPIPPDDAGKEEVIAALVANVEAMIKADRKITALKQLQGHIWRTGFQNNELEGVVFEDVPEALQKWHASGIKVYIYSSGSRLAQRLLFGYTNYGDLRKYLCGFFDTTVGNKRETKSYVEITESVGVDKPSEILFVTDVYQEAVAAKAAGLEVIISIRPGNGPLPDNHGFKTITSFSDI.

The interval 1–240 (MAAAALNGLK…AIKLYQLGLD (240 aa)) is methylthioribulose-1-phosphate dehydratase. Cys-112 lines the substrate pocket. Zn(2+)-binding residues include His-130 and His-132. The Proton donor/acceptor; for methylthioribulose-1-phosphate dehydratase activity role is filled by Glu-155. Position 205 (His-205) interacts with Zn(2+). The tract at residues 278-517 (IVLDIEGTTT…FKTITSFSDI (240 aa)) is enolase-phosphatase E1. Asp-281 and Glu-283 together coordinate Mg(2+). Residues 416–417 (SS) and Lys-450 contribute to the substrate site. Asp-476 lines the Mg(2+) pocket.

In the N-terminal section; belongs to the aldolase class II family. MtnB subfamily. It in the C-terminal section; belongs to the HAD-like hydrolase superfamily. MasA/MtnC family. Zn(2+) serves as cofactor. It depends on Mg(2+) as a cofactor.

The enzyme catalyses 5-(methylsulfanyl)-D-ribulose 1-phosphate = 5-methylsulfanyl-2,3-dioxopentyl phosphate + H2O. It carries out the reaction 5-methylsulfanyl-2,3-dioxopentyl phosphate + H2O = 1,2-dihydroxy-5-(methylsulfanyl)pent-1-en-3-one + phosphate. Its pathway is amino-acid biosynthesis; L-methionine biosynthesis via salvage pathway; L-methionine from S-methyl-5-thio-alpha-D-ribose 1-phosphate: step 2/6. The protein operates within amino-acid biosynthesis; L-methionine biosynthesis via salvage pathway; L-methionine from S-methyl-5-thio-alpha-D-ribose 1-phosphate: step 3/6. It functions in the pathway amino-acid biosynthesis; L-methionine biosynthesis via salvage pathway; L-methionine from S-methyl-5-thio-alpha-D-ribose 1-phosphate: step 4/6. The polypeptide is Probable bifunctional methylthioribulose-1-phosphate dehydratase/enolase-phosphatase E1 1 (Vitis vinifera (Grape)).